The sequence spans 125 residues: Ribosome-binding factor A (125 aa).

This sequence belongs to the RbfA family. Monomer. Binds 30S ribosomal subunits, but not 50S ribosomal subunits or 70S ribosomes.

Its subcellular location is the cytoplasm. In terms of biological role, one of several proteins that assist in the late maturation steps of the functional core of the 30S ribosomal subunit. Associates with free 30S ribosomal subunits (but not with 30S subunits that are part of 70S ribosomes or polysomes). Required for efficient processing of 16S rRNA. May interact with the 5'-terminal helix region of 16S rRNA. This Xylella fastidiosa (strain M23) protein is Ribosome-binding factor A.